Here is a 37-residue protein sequence, read N- to C-terminus: Potassium channel toxin alpha-KTx 1.4 (37 aa).

Disulfide bonds link cysteine 7–cysteine 28, cysteine 13–cysteine 33, and cysteine 17–cysteine 35.

This sequence belongs to the short scorpion toxin superfamily. Potassium channel inhibitor family. Alpha-KTx 01 subfamily. As to expression, expressed by the venom gland.

Its subcellular location is the secreted. Blocks selectively the high conductance calcium-activated (maxi-K) potassium channels. The chain is Potassium channel toxin alpha-KTx 1.4 from Centruroides limbatus (Bark scorpion).